Reading from the N-terminus, the 394-residue chain is Putative pectate lyase 17 (394 aa).

An N-terminal signal peptide occupies residues 1–22 (MTHFTVSCLLVALFLCQSLVHA). Aspartate 192, aspartate 216, and aspartate 220 together coordinate Ca(2+). Arginine 272 is a catalytic residue.

It belongs to the polysaccharide lyase 1 family. Requires Ca(2+) as cofactor.

The enzyme catalyses Eliminative cleavage of (1-&gt;4)-alpha-D-galacturonan to give oligosaccharides with 4-deoxy-alpha-D-galact-4-enuronosyl groups at their non-reducing ends.. The protein operates within glycan metabolism; pectin degradation; 2-dehydro-3-deoxy-D-gluconate from pectin: step 2/5. The sequence is that of Putative pectate lyase 17 from Arabidopsis thaliana (Mouse-ear cress).